The primary structure comprises 149 residues: Stathmin (149 aa).

Alanine 2 carries the post-translational modification N-acetylalanine. At serine 4 the chain carries Phosphoserine. Positions 4 to 145 (SDIQVKELEK…NKESKDPADE (142 aa)) constitute an SLD domain. Lysine 9 is subject to N6-acetyllysine. Serine 16 carries the phosphoserine modification. Serine 25 carries the post-translational modification Phosphoserine; by CDK1, MAPK1 and MAPK3. N6-methyllysine is present on lysine 29. Serine 31 is modified (phosphoserine). The residue at position 38 (serine 38) is a Phosphoserine; by CDK1, MAPK1 and MAPK3. Residues 41 to 140 (KKKDLSLEEI…EEVRKNKESK (100 aa)) are a coiled coil. Serine 63 carries the post-translational modification Phosphoserine; by PKA. 2 positions are modified to N6-acetyllysine: lysine 100 and lysine 119. Over residues 121-143 (ERLREKDKHIEEVRKNKESKDPA) the composition is skewed to basic and acidic residues. The tract at residues 121–149 (ERLREKDKHIEEVRKNKESKDPADETEAD) is disordered.

It belongs to the stathmin family. As to quaternary structure, binds to two alpha/beta-tubulin heterodimers. Interacts with KIST. In terms of processing, many different phosphorylated forms are observed depending on specific combinations among the sites which can be phosphorylated. MAPK is responsible for the phosphorylation of stathmin in response to NGF. Phosphorylation at Ser-16 seems to be required for neuron polarization.

Its subcellular location is the cytoplasm. The protein resides in the cytoskeleton. Functionally, involved in the regulation of the microtubule (MT) filament system by destabilizing microtubules. Prevents assembly and promotes disassembly of microtubules. Its phosphorylation at Ser-16 may be required for axon formation during neurogenesis. Involved in the control of the learned and innate fear. The sequence is that of Stathmin (STMN1) from Bos taurus (Bovine).